The chain runs to 492 residues: Cytoplasmic dynein 1 light intermediate chain 2 (492 aa).

An ATP-binding site is contributed by 61–68 (GEDGSGKT). 3 disordered regions span residues 188–207 (EEGCQGSPQRRGPLTSGSDE), 370–423 (LAKQ…KNNA), and 437–492 (LSKK…ENEA). Phosphoserine is present on residues Ser-194, Ser-383, and Ser-391. Polar residues predominate over residues 370–383 (LAKQPATPTRTSES). Arg-397 bears the Omega-N-methylarginine mark. A compositionally biased stretch (polar residues) spans 437–469 (LSKKTGSPGSPSAGGVQSTAKKSGQKTVLSNVQ). A Phosphothreonine modification is found at Thr-441. Residues Ser-443 and Ser-446 each carry the phosphoserine modification. Basic and acidic residues predominate over residues 471 to 480 (ELDRMTRKPD). Positions 482–492 (MVTNSSTENEA) are enriched in polar residues.

Belongs to the dynein light intermediate chain family. As to quaternary structure, homodimer. The cytoplasmic dynein 1 complex consists of two catalytic heavy chains (HCs) and a number of non-catalytic subunits presented by intermediate chains (ICs), light intermediate chains (LICs) and light chains (LCs); the composition seems to vary in respect to the IC, LIC and LC composition. The heavy chain homodimer serves as a scaffold for the probable homodimeric assembly of the respective non-catalytic subunits. The ICs and LICs bind directly to the HC dimer and the LCs assemble on the IC dimer. Interacts with DYNC1H1; DYNC1LI1 and DYNC1LI2 bind mutually exclusive to DYNC1H.

It is found in the cytoplasm. It localises to the cytoskeleton. Its function is as follows. Acts as one of several non-catalytic accessory components of the cytoplasmic dynein 1 complex that are thought to be involved in linking dynein to cargos and to adapter proteins that regulate dynein function. Cytoplasmic dynein 1 acts as a motor for the intracellular retrograde motility of vesicles and organelles along microtubules. May play a role in binding dynein to membranous organelles or chromosomes. The protein is Cytoplasmic dynein 1 light intermediate chain 2 (Dync1li2) of Mus musculus (Mouse).